Consider the following 393-residue polypeptide: Dual-specificity RNA methyltransferase RlmN (393 aa).

Residue Glu114 is the Proton acceptor of the active site. The 240-residue stretch at 120–359 (EGDRATLCVS…VIVRKTRGDD (240 aa)) folds into the Radical SAM core domain. Residues Cys127 and Cys364 are joined by a disulfide bond. [4Fe-4S] cluster contacts are provided by Cys134, Cys138, and Cys141. S-adenosyl-L-methionine-binding positions include 188–189 (GE), Ser220, 242–244 (SLH), and Asn321. Cys364 serves as the catalytic S-methylcysteine intermediate.

The protein belongs to the radical SAM superfamily. RlmN family. Requires [4Fe-4S] cluster as cofactor.

Its subcellular location is the cytoplasm. The enzyme catalyses adenosine(2503) in 23S rRNA + 2 reduced [2Fe-2S]-[ferredoxin] + 2 S-adenosyl-L-methionine = 2-methyladenosine(2503) in 23S rRNA + 5'-deoxyadenosine + L-methionine + 2 oxidized [2Fe-2S]-[ferredoxin] + S-adenosyl-L-homocysteine. It catalyses the reaction adenosine(37) in tRNA + 2 reduced [2Fe-2S]-[ferredoxin] + 2 S-adenosyl-L-methionine = 2-methyladenosine(37) in tRNA + 5'-deoxyadenosine + L-methionine + 2 oxidized [2Fe-2S]-[ferredoxin] + S-adenosyl-L-homocysteine. Functionally, specifically methylates position 2 of adenine 2503 in 23S rRNA and position 2 of adenine 37 in tRNAs. m2A2503 modification seems to play a crucial role in the proofreading step occurring at the peptidyl transferase center and thus would serve to optimize ribosomal fidelity. In Haemophilus ducreyi (strain 35000HP / ATCC 700724), this protein is Dual-specificity RNA methyltransferase RlmN.